The following is a 367-amino-acid chain: Dual specificity protein phosphatase 1 (367 aa).

The Rhodanese domain occupies 20-137 (RAAQCLLLDC…FSASCPELCS (118 aa)). A Tyrosine-protein phosphatase domain is found at 173–314 (GPVEILSFLY…LLQFESQVLA (142 aa)). The Phosphocysteine intermediate role is filled by Cys258. 2 positions are modified to phosphoserine; by MAPK1 and MAPK3: Ser359 and Ser364.

Belongs to the protein-tyrosine phosphatase family. Non-receptor class dual specificity subfamily. In terms of processing, phosphorylation at Ser-359 and Ser-364 by MAPK1/ERK2 and MAPK3/ERK1 reduces its rate of degradation. 'Lys-48'-linked polyubiquitinated by NEURL3, leading to proteasomal degradation. As to expression, brain. High level expression seen in the cingulate gyrus within the retrospinal cortex, ventral and medial divisions of the anterior thalamus and the medial geniculate nucleus. Expressed at moderate levels in the parietal and temporal cortex. Expressed in the cerebellum.

The protein resides in the nucleus. The catalysed reaction is O-phospho-L-tyrosyl-[protein] + H2O = L-tyrosyl-[protein] + phosphate. It carries out the reaction O-phospho-L-seryl-[protein] + H2O = L-seryl-[protein] + phosphate. It catalyses the reaction O-phospho-L-threonyl-[protein] + H2O = L-threonyl-[protein] + phosphate. In terms of biological role, dual specificity phosphatase that dephosphorylates MAP kinase MAPK1/ERK2 on both 'Thr-183' and 'Tyr-185', regulating its activity during the meiotic cell cycle. This Rattus norvegicus (Rat) protein is Dual specificity protein phosphatase 1.